Reading from the N-terminus, the 603-residue chain is UvrABC system protein C (603 aa).

The 78-residue stretch at 15–92 (DQPGCYLMKD…IKKHDPRFNI (78 aa)) folds into the GIY-YIG domain. Residues 197-232 (KTVKNDLMKKMQEAAENMEFEKAGEFRDQINAIETT) enclose the UVR domain.

This sequence belongs to the UvrC family. Interacts with UvrB in an incision complex.

Its subcellular location is the cytoplasm. Functionally, the UvrABC repair system catalyzes the recognition and processing of DNA lesions. UvrC both incises the 5' and 3' sides of the lesion. The N-terminal half is responsible for the 3' incision and the C-terminal half is responsible for the 5' incision. In Listeria monocytogenes serotype 4a (strain HCC23), this protein is UvrABC system protein C.